Consider the following 352-residue polypeptide: Thiosulfate transporter TsuA (352 aa).

The helical transmembrane segment at 1–21 threads the bilayer; sequence MFSMILSGLICGALLGFVMQR. The Cytoplasmic portion of the chain corresponds to 22 to 44; it reads GRFCLTGGFRDMYIVKNNRMFYA. The chain crosses the membrane as a helical span at residues 45–65; it reads LLIAISVQSVGVFALIQAGLL. The Periplasmic portion of the chain corresponds to 66-70; the sequence is TYEAG. Residues 71–91 form a helical membrane-spanning segment; the sequence is AFPWLGTVIGGYIFGLGIVLA. The Cytoplasmic segment spans residues 92–102; sequence GGCATGTWYRA. Residues 103–123 form a helical membrane-spanning segment; it reads GEGLIGSWIALFTYMVMSAVM. At 124 to 148 the chain is on the periplasmic side; sequence RSPHASGLNQTLQHYSTEHNSIAET. Residues 149–169 form a helical membrane-spanning segment; it reads FNLSVWPLVAVLLVITLWVVM. Over 170 to 197 the chain is Cytoplasmic; that stretch reads KELKKPKLKVATLPPRRTGIAHILFEKR. Residues 198–218 traverse the membrane as a helical segment; it reads WHPFVTAVLIGLIALLAWPLS. The Periplasmic segment spans residues 219-247; sequence EATGRMFGLGITSPTANILQFLVAGDMKY. The helical transmembrane segment at 248-268 threads the bilayer; sequence INWGVFLVLGIFVGSFIAAKA. Residues 269-289 lie on the Cytoplasmic side of the membrane; that stretch reads SREFRVRAADAQTTLRSGLGG. The chain crosses the membrane as a helical span at residues 290–310; sequence VLMGFGASIAGGCSIGNGLVM. At 311 to 317 the chain is on the periplasmic side; sequence TAMMTWQ. The helical transmembrane segment at 318-338 threads the bilayer; that stretch reads GWIGLVFMILGVWTASWLVYV. The Cytoplasmic segment spans residues 339 to 352; the sequence is RPQRKARLATAAAN.

It belongs to the TsuA/YedE (TC 9.B.102) family.

Its subcellular location is the cell inner membrane. It catalyses the reaction thiosulfate(in) = thiosulfate(out). Its function is as follows. Mediates thiosulfate uptake. This Escherichia coli (strain K12) protein is Thiosulfate transporter TsuA.